The sequence spans 298 residues: MQVFTLFSKFKKALTRAILAFIATIIVCTPAQAAEVVNGKLHLRFAIAPMRPTPSQTIKEFEPIFKYLADQLGATYEIVSPESWAAISVAMTNGHVDVGWLGPWGYVLSNKKAGTEVLATVKYRGEPFYKALIVGRADLPIKKWPEDAKGLKLSLSDQGNTSGWLIPMAYFKSIGIDPASYFEYREGATFGQNESQIQHGLIDLGSDMDRGRNGMIEAGQIDPSKSKIVWESSKLPNDAISVPKDFDPALKARITEILTSLSEEKAQSLMGSGYNGFVKAKHSDYKVIEDAGRILGKL.

The N-terminal stretch at 1–33 is a signal peptide; that stretch reads MQVFTLFSKFKKALTRAILAFIATIIVCTPAQA.

This sequence belongs to the phosphate/phosphite/phosphonate binding protein family.

Functionally, probably forms part of a binding-protein-dependent hypophosphite transporter. The polypeptide is Probable phosphite transport system-binding protein HtxB (htxB) (Stutzerimonas stutzeri (Pseudomonas stutzeri)).